Here is a 37-residue protein sequence, read N- to C-terminus: Large ribosomal subunit protein bL36 (37 aa).

The protein belongs to the bacterial ribosomal protein bL36 family.

The protein is Large ribosomal subunit protein bL36 of Aliarcobacter butzleri (strain RM4018) (Arcobacter butzleri).